A 914-amino-acid polypeptide reads, in one-letter code: Isoleucine--tRNA ligase (914 aa).

The 'HIGH' region signature appears at 64–74; sequence PYANGNFHLGH. Glu-557 serves as a coordination point for L-isoleucyl-5'-AMP. The 'KMSKS' region motif lies at 598–602; it reads PMSKS. Lys-601 provides a ligand contact to ATP. The Zn(2+) site is built by Cys-889, Cys-892, Cys-906, and Cys-909.

This sequence belongs to the class-I aminoacyl-tRNA synthetase family. IleS type 1 subfamily. In terms of assembly, monomer. The cofactor is Zn(2+).

It is found in the cytoplasm. The enzyme catalyses tRNA(Ile) + L-isoleucine + ATP = L-isoleucyl-tRNA(Ile) + AMP + diphosphate. Catalyzes the attachment of isoleucine to tRNA(Ile). As IleRS can inadvertently accommodate and process structurally similar amino acids such as valine, to avoid such errors it has two additional distinct tRNA(Ile)-dependent editing activities. One activity is designated as 'pretransfer' editing and involves the hydrolysis of activated Val-AMP. The other activity is designated 'posttransfer' editing and involves deacylation of mischarged Val-tRNA(Ile). This Leptospira interrogans serogroup Icterohaemorrhagiae serovar copenhageni (strain Fiocruz L1-130) protein is Isoleucine--tRNA ligase.